A 197-amino-acid chain; its full sequence is Holliday junction branch migration complex subunit RuvA (197 aa).

A domain I region spans residues 1-62 (MIEFVRGEVA…EDQEVLFGFR (62 aa)). The interval 63-141 (SRRERALFTK…ELAPDYIPSE (79 aa)) is domain II. A flexible linker region spans residues 141 to 145 (EGLFA). The segment at 146 to 197 (QGNAELNEACEALTALGYSEREVEKVKKALQGEVLSTDQYVKRALQLLLNVR) is domain III.

It belongs to the RuvA family. As to quaternary structure, homotetramer. Forms an RuvA(8)-RuvB(12)-Holliday junction (HJ) complex. HJ DNA is sandwiched between 2 RuvA tetramers; dsDNA enters through RuvA and exits via RuvB. An RuvB hexamer assembles on each DNA strand where it exits the tetramer. Each RuvB hexamer is contacted by two RuvA subunits (via domain III) on 2 adjacent RuvB subunits; this complex drives branch migration. In the full resolvosome a probable DNA-RuvA(4)-RuvB(12)-RuvC(2) complex forms which resolves the HJ.

It is found in the cytoplasm. The RuvA-RuvB-RuvC complex processes Holliday junction (HJ) DNA during genetic recombination and DNA repair, while the RuvA-RuvB complex plays an important role in the rescue of blocked DNA replication forks via replication fork reversal (RFR). RuvA specifically binds to HJ cruciform DNA, conferring on it an open structure. The RuvB hexamer acts as an ATP-dependent pump, pulling dsDNA into and through the RuvAB complex. HJ branch migration allows RuvC to scan DNA until it finds its consensus sequence, where it cleaves and resolves the cruciform DNA. The chain is Holliday junction branch migration complex subunit RuvA from Exiguobacterium sibiricum (strain DSM 17290 / CCUG 55495 / CIP 109462 / JCM 13490 / 255-15).